The sequence spans 251 residues: CDP-diacylglycerol pyrophosphatase (251 aa).

A helical transmembrane segment spans residues 4-24; that stretch reads AGLLFLVMIVIAVVAAGIGYW.

It belongs to the Cdh family.

The protein localises to the cell inner membrane. It catalyses the reaction a CDP-1,2-diacyl-sn-glycerol + H2O = a 1,2-diacyl-sn-glycero-3-phosphate + CMP + 2 H(+). It functions in the pathway phospholipid metabolism; CDP-diacylglycerol degradation; phosphatidate from CDP-diacylglycerol: step 1/1. The chain is CDP-diacylglycerol pyrophosphatase from Escherichia coli (strain K12 / MC4100 / BW2952).